We begin with the raw amino-acid sequence, 488 residues long: Glutamyl-tRNA(Gln) amidotransferase subunit A (488 aa).

Catalysis depends on charge relay system residues Lys77 and Ser152. Catalysis depends on Ser176, which acts as the Acyl-ester intermediate.

It belongs to the amidase family. GatA subfamily. As to quaternary structure, heterotrimer of A, B and C subunits.

It catalyses the reaction L-glutamyl-tRNA(Gln) + L-glutamine + ATP + H2O = L-glutaminyl-tRNA(Gln) + L-glutamate + ADP + phosphate + H(+). Its function is as follows. Allows the formation of correctly charged Gln-tRNA(Gln) through the transamidation of misacylated Glu-tRNA(Gln) in organisms which lack glutaminyl-tRNA synthetase. The reaction takes place in the presence of glutamine and ATP through an activated gamma-phospho-Glu-tRNA(Gln). In Streptococcus pyogenes serotype M3 (strain ATCC BAA-595 / MGAS315), this protein is Glutamyl-tRNA(Gln) amidotransferase subunit A.